Here is a 398-residue protein sequence, read N- to C-terminus: 2-amino-3-ketobutyrate coenzyme A ligase (398 aa).

111–112 contacts pyridoxal 5'-phosphate; that stretch reads CF. Histidine 136 contributes to the substrate binding site. Pyridoxal 5'-phosphate contacts are provided by residues serine 185, 210–213, 241–244, and 274–275; these read DDSH, TLGK, and SN. Lysine 244 is modified (N6-(pyridoxal phosphate)lysine). Substrate is bound at residue arginine 368.

The protein belongs to the class-II pyridoxal-phosphate-dependent aminotransferase family. Homodimer. Pyridoxal 5'-phosphate is required as a cofactor.

It carries out the reaction glycine + acetyl-CoA = (2S)-2-amino-3-oxobutanoate + CoA. The protein operates within amino-acid degradation; L-threonine degradation via oxydo-reductase pathway; glycine from L-threonine: step 2/2. Its function is as follows. Catalyzes the cleavage of 2-amino-3-ketobutyrate to glycine and acetyl-CoA. The chain is 2-amino-3-ketobutyrate coenzyme A ligase from Escherichia coli (strain K12).